Reading from the N-terminus, the 334-residue chain is Baseplate wedge protein gp8 (334 aa).

Cysteine 142 and cysteine 153 are disulfide-bonded.

This sequence belongs to the tevenvirinae baseplate structural protein gp8 family. Homodimer. Interacts with gp7. Part of the baseplate macromolecular complex which consists of gp5, gp5.4, gp27 (central spike complex); gp6, gp25, gp53 (inner baseplate); gp7, gp8 (intermediate baseplate); gp9, gp10, gp11, gp12 (peripheral); gp48 and gp54 (proximal region of the tail tube).

It localises to the virion. Intermediate baseplate protein. Involved in the tail assembly. The sequence is that of Baseplate wedge protein gp8 (8) from Enterobacteria phage T4 (Bacteriophage T4).